Reading from the N-terminus, the 332-residue chain is MIDKAYEELIKMKEKIMRDSYTIHKELSESVESILNELWINYSPESVEHSKKLLAIDGGMWVKETRQGVIFIVNAKAIVFEGINEINSEGKVLVHIFSPGNYAKERIELLMQLLELQLALKLVENVDYVLLDGSFSKKLGRHKSELKVDLLDDIVSIDKILSLEEKDEDNMLRFLIAENQLVLSELVSRYKDKLLFISKNSKSSDLFKQAYSDITILELFTQNCGYSKILEKKIDENYILSRKASKLLSGLNYYFTNLRLEPSERLFRLDFFNADKIFEYLKVLKPVSLKGYPYPLIKVHKDVRVGKEDRERIYSILEMKRKDISWWPSQFY.

Mn(2+)-binding residues include aspartate 57 and aspartate 132.

It belongs to the NurA family. The cofactor is Mn(2+).

Functionally, involved in DNA double-strand break (DSB) repair. Probably acts with HerA to stimulate resection of the 5' strand and produce the long 3' single-strand that is required for RadA loading. Exhibits both single-stranded endonuclease activity and 5'-3' exonuclease activity on single-stranded and double-stranded DNA. This chain is DNA double-strand break repair nuclease NurA, found in Sulfolobus acidocaldarius (strain ATCC 33909 / DSM 639 / JCM 8929 / NBRC 15157 / NCIMB 11770).